A 459-amino-acid polypeptide reads, in one-letter code: Limonoid 7-O-acetyltransferse (459 aa).

Active-site proton acceptor residues include His-167 and Asp-391.

Belongs to the plant acyltransferase family. As to quaternary structure, monomer. In terms of tissue distribution, expressed in maturing fruits and in juice vesicles.

It catalyses the reaction (1S)-1-acetoxy-luvungin A + acetyl-CoA = (1S)-1,7-diacetoxy-luvungin A + CoA. Its pathway is secondary metabolite biosynthesis; terpenoid biosynthesis. Its function is as follows. Acetyltransferase involved in the biosynthesis of limonoids triterpene natural products such as limonin, a compound with insecticidal activity responsible for the bitter taste in citrus. Catalyzes the formation of (1S)-1,7-diacetoxy-luvungin A from (1S)-1-acetoxy-luvungin A. The polypeptide is Limonoid 7-O-acetyltransferse (Citrus sinensis (Sweet orange)).